The chain runs to 273 residues: WIMGHMVNAIGQIDEFVNLGANSIETDVSFDSSANPEYTYHGIPCDCGRNCKKWENFNDFLKGLRSATTPGNSKYKEKLVLVVFDLKTGSLYDNQANDAGKKLAKNLLQHYWNNGNNGGRAYIVLSIPDLNHYPLIKGFTDTLKQEGHPELLDKLGYDFSGNDAIGDVAKAYKKAGVSGHVWQSDGITNCLLRGLTRVKEAVANRDSGNGYINKVYYWTVDKRATTRDALDAGVDGIMTNYPDVITDVLNEAAYKSKFRVATYEDNPWETFKK.

Histidine 5 is a catalytic residue. The Mg(2+) site is built by glutamate 25 and aspartate 27. Histidine 41 functions as the Nucleophile in the catalytic mechanism. Intrachain disulfides connect cysteine 45-cysteine 51 and cysteine 47-cysteine 190. Aspartate 85 provides a ligand contact to Mg(2+).

This sequence belongs to the arthropod phospholipase D family. Class II subfamily. Mg(2+) serves as cofactor. Expressed by the venom gland.

Its subcellular location is the secreted. The enzyme catalyses an N-(acyl)-sphingosylphosphocholine = an N-(acyl)-sphingosyl-1,3-cyclic phosphate + choline. It catalyses the reaction an N-(acyl)-sphingosylphosphoethanolamine = an N-(acyl)-sphingosyl-1,3-cyclic phosphate + ethanolamine. It carries out the reaction a 1-acyl-sn-glycero-3-phosphocholine = a 1-acyl-sn-glycero-2,3-cyclic phosphate + choline. The catalysed reaction is a 1-acyl-sn-glycero-3-phosphoethanolamine = a 1-acyl-sn-glycero-2,3-cyclic phosphate + ethanolamine. Dermonecrotic toxins cleave the phosphodiester linkage between the phosphate and headgroup of certain phospholipids (sphingolipid and lysolipid substrates), forming an alcohol (often choline) and a cyclic phosphate. This toxin acts on sphingomyelin (SM). It may also act on ceramide phosphoethanolamine (CPE), lysophosphatidylcholine (LPC) and lysophosphatidylethanolamine (LPE), but not on lysophosphatidylserine (LPS), and lysophosphatidylglycerol (LPG). It acts by transphosphatidylation, releasing exclusively cyclic phosphate products as second products. Induces dermonecrosis, hemolysis, increased vascular permeability, edema, inflammatory response, and platelet aggregation. This Loxosceles hirsuta (Recluse spider) protein is Dermonecrotic toxin LhSicTox-alphaIA1iii.